The chain runs to 154 residues: Xanthine-guanine phosphoribosyltransferase (154 aa).

Residues 37–38 (RG), R69, and 88–96 (EDLVDSGDT) contribute to the 5-phospho-alpha-D-ribose 1-diphosphate site. Position 69 (R69) interacts with GMP. Position 89 (D89) interacts with Mg(2+). Guanine contacts are provided by D92 and I135. Residues D92 and I135 each coordinate xanthine. GMP contacts are provided by residues 92–96 (DSGDT) and 134–135 (WI).

It belongs to the purine/pyrimidine phosphoribosyltransferase family. XGPT subfamily. As to quaternary structure, homotetramer. Mg(2+) is required as a cofactor.

The protein resides in the cell inner membrane. It carries out the reaction GMP + diphosphate = guanine + 5-phospho-alpha-D-ribose 1-diphosphate. It catalyses the reaction XMP + diphosphate = xanthine + 5-phospho-alpha-D-ribose 1-diphosphate. The enzyme catalyses IMP + diphosphate = hypoxanthine + 5-phospho-alpha-D-ribose 1-diphosphate. It participates in purine metabolism; GMP biosynthesis via salvage pathway; GMP from guanine: step 1/1. The protein operates within purine metabolism; XMP biosynthesis via salvage pathway; XMP from xanthine: step 1/1. Functionally, purine salvage pathway enzyme that catalyzes the transfer of the ribosyl-5-phosphate group from 5-phospho-alpha-D-ribose 1-diphosphate (PRPP) to the N9 position of the 6-oxopurines guanine and xanthine to form the corresponding ribonucleotides GMP (guanosine 5'-monophosphate) and XMP (xanthosine 5'-monophosphate), with the release of PPi. To a lesser extent, also acts on hypoxanthine. The protein is Xanthine-guanine phosphoribosyltransferase of Vibrio vulnificus (strain CMCP6).